A 222-amino-acid chain; its full sequence is uncharacterized protein (222 aa).

2 helical membrane-spanning segments follow: residues 22-42 (IRVI…FLYI) and 189-209 (AICL…FCLV).

The protein resides in the cell membrane. This is an uncharacterized protein from Escherichia coli (strain K12).